Consider the following 387-residue polypeptide: Patatin-02 (387 aa).

An N-terminal signal peptide occupies residues 1–23 (MATTKSFLILIVMILATTSSTFA). The PNPLA domain maps to 32–230 (LSIDGGGIKG…TVADPALLSV (199 aa)). The short motif at 36–41 (GGGIKG) is the GXGXXG element. The GXSXG signature appears at 75–79 (GTSTG). The Nucleophile role is filled by S77. Residue N115 is glycosylated (N-linked (GlcNAc...) asparagine). Residue D216 is the Proton acceptor of the active site. The DGA/G motif lies at 216 to 218 (DGA). Positions 361–385 (ETYEEALKRFAKLLSDRKKLRANKA) form a coiled coil.

Belongs to the patatin family. As to expression, tuber and stolon.

Its subcellular location is the vacuole. Probable lipolytic acyl hydrolase (LAH), an activity which is thought to be involved in the response of tubers to pathogens. The chain is Patatin-02 from Solanum tuberosum (Potato).